Reading from the N-terminus, the 196-residue chain is ATP-dependent Clp protease proteolytic subunit (196 aa).

S101 acts as the Nucleophile in catalysis. The active site involves H126.

It belongs to the peptidase S14 family. Component of the chloroplastic Clp protease core complex.

Its subcellular location is the plastid. It is found in the chloroplast stroma. The enzyme catalyses Hydrolysis of proteins to small peptides in the presence of ATP and magnesium. alpha-casein is the usual test substrate. In the absence of ATP, only oligopeptides shorter than five residues are hydrolyzed (such as succinyl-Leu-Tyr-|-NHMec, and Leu-Tyr-Leu-|-Tyr-Trp, in which cleavage of the -Tyr-|-Leu- and -Tyr-|-Trp bonds also occurs).. In terms of biological role, cleaves peptides in various proteins in a process that requires ATP hydrolysis. Has a chymotrypsin-like activity. Plays a major role in the degradation of misfolded proteins. The sequence is that of ATP-dependent Clp protease proteolytic subunit from Aethionema cordifolium (Lebanon stonecress).